Consider the following 329-residue polypeptide: GMP reductase (329 aa).

Cys-178 acts as the Thioimidate intermediate in catalysis. 207-230 (IIADGGIRNNGDIAKSIRFGATMC) is a binding site for NADP(+).

This sequence belongs to the IMPDH/GMPR family. GuaC type 2 subfamily.

The enzyme catalyses IMP + NH4(+) + NADP(+) = GMP + NADPH + 2 H(+). In terms of biological role, catalyzes the irreversible NADPH-dependent deamination of GMP to IMP. It functions in the conversion of nucleobase, nucleoside and nucleotide derivatives of G to A nucleotides, and in maintaining the intracellular balance of A and G nucleotides. The chain is GMP reductase from Lacticaseibacillus casei (strain BL23) (Lactobacillus casei).